The following is a 1187-amino-acid chain: MATESTTNTTTIIARADQHDIDLHKASDRVNFGSIKEPIDVPYLLGVQTDSFDWLIGSDRWKARVEEDEKNGTNTVAHTSGLDEVFNEISPIENFAQTMSLTFSDPYFEEPRHTVQECKEKDYTYSAPLYVNAEFENGDTGEIKSQTVFMGDFPLQTPHGTFIIGGTERVIVSQLVRSPGVYFDRQQDRTSDKEVFGAKIIPSRGAWLEFEIDKKDQPQVRVDRKRKQSAIVFLMAIGMTKSEIAQAFKDYPLVLDALEKETLETQDEALVDLYRKIRPADTPTPEAGKNLLDSFYFNTKRYDLARVGRYKINRKLGVEADFNDRSLHQEDIIATIKYLVALHDGAATFPGKRNGEDVDLRVDVDDIDHFGNRRIRQVGELIQNQLRTGLSRMERVVRERMTTQDAEAITPQSLINIRPVNATIKEFFGTSQLSQFMDQNNPLSGVTNKRRLSALGPGGLSRDRASMEVRDVHPSHFGRMCPIESPEGPNIGLIGSLATFGRVNPFGFIETPYRKVVNGHVTDEVEYMTADRDLDHVIAQANQELDENGNFVSKSALARVGEEEAVDVPVSSVDYMDVSPRQMVSLGASLIPFLEHDEGHRALMGTNMQRQAVPLIESERPLVGTGSEWRAANDSGDVIKSEKDGVVTYVSADLIRVMNDDGTTSSYKLAKFQRSNQTTCYNQRPIIHDGERVEAGSVLADGPAIQKGDLALGKNLLIAFMPWNGYNYEDAVIISQRLVQDDTLSSIHIEEYEIDARETKLGAEEITRDLPNVGEDAVANLDERGIIRIGAEVEAGDILVGKVTPKGETELTPEERLLRAIFGEKSREVRDTSLRVPHGETGTVIGVKEITREDAEEDGDELPNGVNQMIRVYIAQHRKITVGDKLSGRHGNKGCISRILPEEDMPFLADGTPVDIMLNPLGVPSRMNLGQVLELHLGWIAHSGWDISLDPNMEAEWKKLVPSGAEKAEPNTPVATPVFDGVKPEVLKGLLSTTLPNRDGDRLVGPDGKATLFDGRTGEPYTKPISVGYMYMLKLHHLVDDKIHARSTGPYSMITQQPLGGKAQFGGQRFGEMEVWALEAYGAAYTLHEMMTTKSDDVDGRVRVYGAIVKGDNLPPAGIPESFKVLLKEMQSLSLNVEVLNAEGVAIDMKDEDDDPASSADDLGFNIGARPDAAAKEDQKAEEPEYQ.

The disordered stretch occupies residues 1150–1187 (KDEDDDPASSADDLGFNIGARPDAAAKEDQKAEEPEYQ). Basic and acidic residues predominate over residues 1173–1187 (AAAKEDQKAEEPEYQ).

It belongs to the RNA polymerase beta chain family. The RNAP catalytic core consists of 2 alpha, 1 beta, 1 beta' and 1 omega subunit. When a sigma factor is associated with the core the holoenzyme is formed, which can initiate transcription.

It catalyses the reaction RNA(n) + a ribonucleoside 5'-triphosphate = RNA(n+1) + diphosphate. DNA-dependent RNA polymerase catalyzes the transcription of DNA into RNA using the four ribonucleoside triphosphates as substrates. This Bifidobacterium longum subsp. infantis (strain ATCC 15697 / DSM 20088 / JCM 1222 / NCTC 11817 / S12) protein is DNA-directed RNA polymerase subunit beta.